The chain runs to 152 residues: tRNA-specific adenosine deaminase (152 aa).

The CMP/dCMP-type deaminase domain maps to 2 to 111 (AERTHFMELA…AQDPKGGAVE (110 aa)). H53 provides a ligand contact to Zn(2+). Residue E55 is the Proton donor of the active site. 2 residues coordinate Zn(2+): C83 and C86.

It belongs to the cytidine and deoxycytidylate deaminase family. Homodimer. Zn(2+) serves as cofactor.

It catalyses the reaction adenosine(34) in tRNA + H2O + H(+) = inosine(34) in tRNA + NH4(+). Its function is as follows. Catalyzes the deamination of adenosine to inosine at the wobble position 34 of tRNA(Arg2). This Agrobacterium fabrum (strain C58 / ATCC 33970) (Agrobacterium tumefaciens (strain C58)) protein is tRNA-specific adenosine deaminase.